Here is a 490-residue protein sequence, read N- to C-terminus: Bifunctional dihydrocamalexate synthase/camalexin synthase (490 aa).

Residues 1–21 (MSVFLCFLVLLPLILIFLNVL) form a helical membrane-spanning segment.

It belongs to the cytochrome P450 family.

The protein resides in the membrane. It catalyses the reaction 2-(L-cystein-S-yl)-2-(1H-indol-3-yl)-acetonitrile + 2 reduced [NADPH--hemoprotein reductase] + 2 O2 = camalexin + hydrogen cyanide + 2 oxidized [NADPH--hemoprotein reductase] + CO2 + 4 H2O + 2 H(+). The catalysed reaction is 2-(L-cystein-S-yl)-2-(1H-indol-3-yl)-acetonitrile + reduced [NADPH--hemoprotein reductase] + O2 = (R)-dihydrocamalexate + hydrogen cyanide + oxidized [NADPH--hemoprotein reductase] + 2 H2O + 2 H(+). The enzyme catalyses (R)-dihydrocamalexate + reduced [NADPH--hemoprotein reductase] + O2 = camalexin + oxidized [NADPH--hemoprotein reductase] + CO2 + 2 H2O. Its function is as follows. Multifunctional enzyme involved in the biosynthesis of the indole-derived phytoalexin camalexin. Catalyzes two reactions, the formation of dihydrocamalexate from indole-3-acetonitrile-cysteine conjugate and the oxidative decarboxylation of dihydrocamalexate which is the final step in camalexin biosynthesis. Required for the resistance to the fungal pathogens A.brassicicola, B.cinerea, B.elliptica, B.tulipae, L.maculans and Colletotrichum higginsianum. Seems not to be required for resistance to P.syringae, P.porri, and not involved in age-related resistance. In Arabidopsis thaliana (Mouse-ear cress), this protein is Bifunctional dihydrocamalexate synthase/camalexin synthase (CYP71B15).